The chain runs to 540 residues: uncharacterized protein (540 aa).

2 ABC transporter domains span residues 2–252 (IAVN…KLSQ) and 320–537 (LRVE…LTEL). 34–41 (GANGAGKS) is an ATP binding site.

The protein belongs to the ABC transporter superfamily.

This is an uncharacterized protein from Bacillus subtilis (strain 168).